A 179-amino-acid chain; its full sequence is tRNA-splicing endonuclease (179 aa).

Active-site residues include Tyr-115, His-123, and Lys-154.

It belongs to the tRNA-intron endonuclease family. Archaeal short subfamily. As to quaternary structure, homotetramer; although the tetramer contains four active sites, only two participate in the cleavage. Therefore, it should be considered as a dimer of dimers.

It carries out the reaction pretRNA = a 3'-half-tRNA molecule with a 5'-OH end + a 5'-half-tRNA molecule with a 2',3'-cyclic phosphate end + an intron with a 2',3'-cyclic phosphate and a 5'-hydroxyl terminus.. Endonuclease that removes tRNA introns. Cleaves pre-tRNA at the 5'- and 3'-splice sites to release the intron. The products are an intron and two tRNA half-molecules bearing 2',3' cyclic phosphate and 5'-OH termini. Recognizes a pseudosymmetric substrate in which 2 bulged loops of 3 bases are separated by a stem of 4 bp. This is tRNA-splicing endonuclease from Methanopyrus kandleri (strain AV19 / DSM 6324 / JCM 9639 / NBRC 100938).